A 237-amino-acid chain; its full sequence is Insulin-like growth factor-binding protein 4 (237 aa).

One can recognise an IGFBP N-terminal domain in the interval 2-82 (EAIHCPPCSE…VHGQGVCMEL (81 aa)). Intrachain disulfides connect Cys6/Cys32, Cys9/Cys34, Cys17/Cys35, Cys23/Cys38, Cys46/Cys59, and Cys53/Cys79. An N-linked (GlcNAc...) asparagine glycan is attached at Asn104. 4 disulfides stabilise this stretch: Cys110–Cys117, Cys153–Cys183, Cys194–Cys205, and Cys207–Cys228. The Thyroglobulin type-1 domain occupies 150 to 228 (QGSCQSELHR…GLEPKGELDC (79 aa)). The residue at position 234 (Ser234) is a Phosphoserine.

Binds IGF2 more than IGF1. Post-translationally, there are two different molecular mass variants (29 kDa and 24 kDa forms). The 29 kDa form was shown to be N-glycosylated. In terms of tissue distribution, detected in adult ewe, liver &gt; kidney &gt; lung &gt;&gt; heart and also in several fetal tissues.

The protein resides in the secreted. In terms of biological role, IGF-binding proteins prolong the half-life of the IGFs and have been shown to either inhibit or stimulate the growth promoting effects of the IGFs on cell culture. They alter the interaction of IGFs with their cell surface receptors. In Ovis aries (Sheep), this protein is Insulin-like growth factor-binding protein 4 (IGFBP4).